The following is a 184-amino-acid chain: Latex serine proteinase inhibitor (184 aa).

Cys45 and Cys89 are oxidised to a cystine. Asn84 and Asn90 each carry an N-linked (GlcNAc...) asparagine glycan. Cys142 and Cys153 are disulfide-bonded.

This sequence belongs to the protease inhibitor I3 (leguminous Kunitz-type inhibitor) family.

The protein resides in the secreted. It localises to the extracellular space. The sequence is that of Latex serine proteinase inhibitor from Carica papaya (Papaya).